Reading from the N-terminus, the 408-residue chain is 2,3-bisphosphoglycerate-independent phosphoglycerate mutase 1 (408 aa).

Belongs to the BPG-independent phosphoglycerate mutase family. A-PGAM subfamily. In terms of assembly, monomer. Mn(2+) is required as a cofactor.

The catalysed reaction is (2R)-2-phosphoglycerate = (2R)-3-phosphoglycerate. The protein operates within carbohydrate degradation; glycolysis; pyruvate from D-glyceraldehyde 3-phosphate: step 3/5. In terms of biological role, catalyzes the interconversion of 2-phosphoglycerate and 3-phosphoglycerate. In Archaeoglobus fulgidus (strain ATCC 49558 / DSM 4304 / JCM 9628 / NBRC 100126 / VC-16), this protein is 2,3-bisphosphoglycerate-independent phosphoglycerate mutase 1 (apgM1).